The chain runs to 464 residues: Protein FAM90A24 (464 aa).

Disordered regions lie at residues 1–42 (MMAR…DPRL), 69–389 (VPAT…HDGA), and 415–437 (HSPE…SEAP). 2 stretches are compositionally biased toward basic and acidic residues: residues 74–89 (GKKE…KPRG) and 97–114 (NKDK…DPQR). A compositionally biased stretch (low complexity) spans 180-197 (LASLSPLRKASLSSSSSL).

The protein belongs to the FAM90 family.

The protein is Protein FAM90A24 of Homo sapiens (Human).